The sequence spans 194 residues: FMN-dependent NADH:quinone oxidoreductase (194 aa).

FMN is bound by residues S10 and 90–93 (MYNL).

This sequence belongs to the azoreductase type 1 family. Homodimer. FMN serves as cofactor.

It carries out the reaction 2 a quinone + NADH + H(+) = 2 a 1,4-benzosemiquinone + NAD(+). The enzyme catalyses N,N-dimethyl-1,4-phenylenediamine + anthranilate + 2 NAD(+) = 2-(4-dimethylaminophenyl)diazenylbenzoate + 2 NADH + 2 H(+). Its function is as follows. Quinone reductase that provides resistance to thiol-specific stress caused by electrophilic quinones. Functionally, also exhibits azoreductase activity. Catalyzes the reductive cleavage of the azo bond in aromatic azo compounds to the corresponding amines. This Haemophilus influenzae (strain 86-028NP) protein is FMN-dependent NADH:quinone oxidoreductase.